We begin with the raw amino-acid sequence, 186 residues long: uncharacterized protein (186 aa).

The N-terminal stretch at 1–18 (MNKFLFAAALIVSGLLVG) is a signal peptide. A lipid anchor (N-palmitoyl cysteine) is attached at C19. A lipid anchor (S-diacylglycerol cysteine) is attached at C19.

The protein localises to the cell membrane. This is an uncharacterized protein from Escherichia coli (strain K12).